We begin with the raw amino-acid sequence, 517 residues long: Crotonobetaine/carnitine--CoA ligase (517 aa).

This sequence belongs to the ATP-dependent AMP-binding enzyme family.

It carries out the reaction 4-(trimethylamino)butanoate + ATP + CoA = 4-(trimethylamino)butanoyl-CoA + AMP + diphosphate. The catalysed reaction is crotonobetaine + ATP + CoA = crotonobetainyl-CoA + AMP + diphosphate. The enzyme catalyses (R)-carnitine + ATP + CoA = (R)-carnitinyl-CoA + AMP + diphosphate. It functions in the pathway amine and polyamine metabolism; carnitine metabolism. Functionally, catalyzes the transfer of CoA to carnitine, generating the initial carnitinyl-CoA needed for the CaiB reaction cycle. Also has activity toward crotonobetaine and gamma-butyrobetaine. The sequence is that of Crotonobetaine/carnitine--CoA ligase from Escherichia coli O45:K1 (strain S88 / ExPEC).